The sequence spans 878 residues: Alanine--tRNA ligase (878 aa).

Residues His-566, His-570, Cys-668, and His-672 each contribute to the Zn(2+) site. The segment at 846-866 (GGGRPDMAQAGGKQPEKLEEA) is disordered.

Belongs to the class-II aminoacyl-tRNA synthetase family. Zn(2+) serves as cofactor.

Its subcellular location is the cytoplasm. The catalysed reaction is tRNA(Ala) + L-alanine + ATP = L-alanyl-tRNA(Ala) + AMP + diphosphate. In terms of biological role, catalyzes the attachment of alanine to tRNA(Ala) in a two-step reaction: alanine is first activated by ATP to form Ala-AMP and then transferred to the acceptor end of tRNA(Ala). Also edits incorrectly charged Ser-tRNA(Ala) and Gly-tRNA(Ala) via its editing domain. The chain is Alanine--tRNA ligase from Bacillus pumilus (strain SAFR-032).